The sequence spans 311 residues: Aurora kinase (311 aa).

Positions 20 to 300 (FEIGRFLGRG…IEDILRHPFL (281 aa)) constitute a Protein kinase domain. An ATP-binding site is contributed by Lys49. Asp143 acts as the Proton acceptor in catalysis. Residues 189–216 (DFGWSVHHPTHGGRRRTQCGTLDYLPPE) are activation loop. Position 205 is a phosphothreonine; by autocatalysis (Thr205). Residues 280 to 299 (MLIRSPEARISIEDILRHPF) carry the Destruction (D)-box motif.

Belongs to the protein kinase superfamily. Ser/Thr protein kinase family. Aurora subfamily. In terms of assembly, interacts with EB1 (via C-terminal residues 101-238). In terms of processing, phosphorylated in mitosis and cytokinesis. Activated by autophosphorylation at Thr-205.

Its subcellular location is the nucleus. It is found in the cytoplasm. It localises to the cytoskeleton. The protein resides in the microtubule organizing center. The protein localises to the centrosome. Its subcellular location is the spindle. It is found in the spindle pole. It localises to the nucleus membrane. The catalysed reaction is L-seryl-[protein] + ATP = O-phospho-L-seryl-[protein] + ADP + H(+). It catalyses the reaction L-threonyl-[protein] + ATP = O-phospho-L-threonyl-[protein] + ADP + H(+). Its activity is regulated as follows. Activated by cell-cycle phase specific phosphorylation. Inhibited by ATP-competitive inhibitors N-[4-[[6-Methoxy-7-[3-(4-morpholinyl)propoxy]-4-quinazolinyl]amino]phenyl]benzamide (ZM447439) and cyclopropanecarboxylic acid-(3-(4-(3-trifluoromethylphenylamino)-pyrimidin-2-ylamino)-phenyl)-amide (CFPPA). Inhibition leads to reduced growth, increased cytokinesis, microtubular defects, and increased ploidy of the cells. Involved in regulation of the cell cycle. Required for mitotic cell division and cytokinesis. Based on its localization to centrosomes and spindle microtubules, as well as to various cytoskeletal components such as the median body, parental attachment disk, and anterior and posterior-lateral paraflagellar dense rods, may coordinate reorganization and segregation of tubulin-containing structures during mitosis and cytokinesis. May regulate microtubule disassembly by phosphorylating cytoskeletal proteins leading to their destabilization. Phosphorylates EB1 at 'Ser-148' in vitro. Phosphorylates histone H3 in vitro. This chain is Aurora kinase, found in Giardia intestinalis (strain ATCC 50803 / WB clone C6) (Giardia lamblia).